We begin with the raw amino-acid sequence, 1027 residues long: Protein translocase subunit SecA (1027 aa).

Residues Q143, G161–T165, and D661 each bind ATP. Residues E981–P1027 form a disordered region. The Zn(2+) site is built by C1011, C1013, C1022, and H1023.

The protein belongs to the SecA family. In terms of assembly, monomer and homodimer. Part of the essential Sec protein translocation apparatus which comprises SecA, SecYEG and auxiliary proteins SecDF. Other proteins may also be involved. The cofactor is Zn(2+).

It localises to the cell inner membrane. The protein resides in the cytoplasm. The enzyme catalyses ATP + H2O + cellular proteinSide 1 = ADP + phosphate + cellular proteinSide 2.. Functionally, part of the Sec protein translocase complex. Interacts with the SecYEG preprotein conducting channel. Has a central role in coupling the hydrolysis of ATP to the transfer of proteins into and across the cell membrane, serving as an ATP-driven molecular motor driving the stepwise translocation of polypeptide chains across the membrane. This is Protein translocase subunit SecA from Chlorobium limicola (strain DSM 245 / NBRC 103803 / 6330).